A 439-amino-acid chain; its full sequence is F-box/FBD/LRR-repeat protein At5g56570 (439 aa).

The 47-residue stretch at 35–81 (PTELSDMPDDLIFKIFSFLPFFKEDLATRFISEYGKGLWNPDPNAIF) folds into the F-box domain. 2 LRR repeats span residues 155–177 (CTTL…WFRL) and 223–246 (VPTL…SFWI). The FBD domain maps to 361 to 411 (VWEKPTVVPECLSTRLEILKWRDYEGTEHEKDMVGYILANATFLQRATFST).

In Arabidopsis thaliana (Mouse-ear cress), this protein is F-box/FBD/LRR-repeat protein At5g56570.